Consider the following 516-residue polypeptide: Adenine DNA glycosylase (516 aa).

A compositionally biased stretch (basic residues) spans 1-23 (MKKLRASVRSHKKQPANHKRRGK). Positions 1 to 38 (MKKLRASVRSHKKQPANHKRRGKCALSSSQAKPSGLDG) are disordered. Catalysis depends on glutamate 105, which acts as the Proton donor/acceptor. [4Fe-4S] cluster-binding residues include cysteine 261, cysteine 268, cysteine 271, and cysteine 277. The region spanning 335–467 (PREEYSATCV…AMKKVFRVYE (133 aa)) is the Nudix hydrolase domain. The Nudix box motif lies at 376–398 (VTLEPSGQHQHKALLQELQHWSA). Residues 474–516 (CKGSKRPQVCTPSSRKKPSRGQQVLDRFFQRHIPTHKPNSTTQ) form a disordered region.

This sequence belongs to the Nth/MutY family. The cofactor is [4Fe-4S] cluster. In terms of tissue distribution, expressed in brain, spleen, heart, liver and kidney.

The protein resides in the nucleus. Its subcellular location is the mitochondrion. It carries out the reaction Hydrolyzes free adenine bases from 7,8-dihydro-8-oxoguanine:adenine mismatched double-stranded DNA, leaving an apurinic site.. Functionally, involved in oxidative DNA damage repair. Initiates repair of A*oxoG to C*G by removing the inappropriately paired adenine base from the DNA backbone. Possesses both adenine and 2-OH-A DNA glycosylase activities. This chain is Adenine DNA glycosylase (Mutyh), found in Rattus norvegicus (Rat).